A 204-amino-acid chain; its full sequence is Somatotropin (204 aa).

Residues 1–17 (MNSVVLLLSVVCLGVSS) form the signal peptide. A Pyrrolidone carboxylic acid modification is found at Q18. A Zn(2+)-binding site is contributed by H36. Residues C69 and C177 are joined by a disulfide bond. A Zn(2+)-binding site is contributed by E186. C194 and C202 are disulfide-bonded.

It belongs to the somatotropin/prolactin family.

The protein localises to the secreted. Growth hormone plays an important role in growth control and involved in the regulation of several anabolic processes. In Oreochromis niloticus (Nile tilapia), this protein is Somatotropin (gh).